The sequence spans 455 residues: Zinc finger protein ZPR1 homolog (455 aa).

C4-type zinc fingers lie at residues 28–60 (CPVCEEDGETRIMCTSIPYYRAVILMSFECPHC) and 247–279 (CPNCHGPTEVKMKPTDIPFFQTVIIMSLACDRC).

Belongs to the ZPR1 family.

The protein resides in the nucleus. This is Zinc finger protein ZPR1 homolog from Caenorhabditis elegans.